Consider the following 261-residue polypeptide: Ribonuclease HII (261 aa).

Residues 1 to 20 (MIRDKSAKRPAKDAPKKAAV) show a composition bias toward basic and acidic residues. A disordered region spans residues 1-23 (MIRDKSAKRPAKDAPKKAAVKEA). Residues 42 to 230 (WPVAGCDEAG…VAAARAKHMP (189 aa)) form the RNase H type-2 domain. Positions 48, 49, and 139 each coordinate a divalent metal cation.

The protein belongs to the RNase HII family. The cofactor is Mn(2+). Mg(2+) is required as a cofactor.

It is found in the cytoplasm. It catalyses the reaction Endonucleolytic cleavage to 5'-phosphomonoester.. Its function is as follows. Endonuclease that specifically degrades the RNA of RNA-DNA hybrids. This is Ribonuclease HII from Bradyrhizobium diazoefficiens (strain JCM 10833 / BCRC 13528 / IAM 13628 / NBRC 14792 / USDA 110).